Consider the following 245-residue polypeptide: Ubiquinone/menaquinone biosynthesis C-methyltransferase UbiE (245 aa).

S-adenosyl-L-methionine is bound by residues T71, D92, and 118–119; that span reads DA.

Belongs to the class I-like SAM-binding methyltransferase superfamily. MenG/UbiE family.

It catalyses the reaction a 2-demethylmenaquinol + S-adenosyl-L-methionine = a menaquinol + S-adenosyl-L-homocysteine + H(+). The enzyme catalyses a 2-methoxy-6-(all-trans-polyprenyl)benzene-1,4-diol + S-adenosyl-L-methionine = a 5-methoxy-2-methyl-3-(all-trans-polyprenyl)benzene-1,4-diol + S-adenosyl-L-homocysteine + H(+). Its pathway is quinol/quinone metabolism; menaquinone biosynthesis; menaquinol from 1,4-dihydroxy-2-naphthoate: step 2/2. It participates in cofactor biosynthesis; ubiquinone biosynthesis. Its function is as follows. Methyltransferase required for the conversion of demethylmenaquinol (DMKH2) to menaquinol (MKH2) and the conversion of 2-polyprenyl-6-methoxy-1,4-benzoquinol (DDMQH2) to 2-polyprenyl-3-methyl-6-methoxy-1,4-benzoquinol (DMQH2). The polypeptide is Ubiquinone/menaquinone biosynthesis C-methyltransferase UbiE (Neisseria gonorrhoeae (strain ATCC 700825 / FA 1090)).